The following is a 296-amino-acid chain: 4-diphosphocytidyl-2-C-methyl-D-erythritol kinase (296 aa).

K11 is a catalytic residue. 96-106 (PVSSGLAGGSA) lines the ATP pocket. D136 is a catalytic residue.

It belongs to the GHMP kinase family. IspE subfamily.

It carries out the reaction 4-CDP-2-C-methyl-D-erythritol + ATP = 4-CDP-2-C-methyl-D-erythritol 2-phosphate + ADP + H(+). It participates in isoprenoid biosynthesis; isopentenyl diphosphate biosynthesis via DXP pathway; isopentenyl diphosphate from 1-deoxy-D-xylulose 5-phosphate: step 3/6. Catalyzes the phosphorylation of the position 2 hydroxy group of 4-diphosphocytidyl-2C-methyl-D-erythritol. In Anaplasma phagocytophilum (strain HZ), this protein is 4-diphosphocytidyl-2-C-methyl-D-erythritol kinase.